Consider the following 294-residue polypeptide: Phosphoprotein (294 aa).

Residues 12–28 (MGNEAAKAAEAFQRSLK) form a binding to monomeric RNA-free nucleoprotein region. The interval 52-97 (KPTISKSTKVTTPPERRNAWGEKPDTTRNQTEEARNEATLEDTSRL) is disordered. Residues 65–97 (PERRNAWGEKPDTTRNQTEEARNEATLEDTSRL) show a composition bias toward basic and acidic residues. Ser-106 bears the Phosphoserine mark. Positions 123-128 (KKKVTF) are binding to host phosphatase PP1. The tract at residues 135-157 (RYTKLEMEALELLSDNEDDDAES) is binding to protein M2-1. A phosphoserine mark is found at Ser-148, Ser-157, Ser-158, Ser-168, and Ser-171. Residues 169–194 (ALSLEARLESIDEKLSMILGLLRTLN) are oligomerization and binding to RNA-directed RNA polymerase L. Positions 234–294 (MKEEAKQKSK…PDDDLYSLTM (61 aa)) are disordered. The tract at residues 251–279 (LTEKAKELNKIVEDESTSGESEEEEEEED) is binding to RNA-directed RNA polymerase L. The segment covering 253-263 (EKAKELNKIVE) has biased composition (basic and acidic residues). Over residues 264 to 294 (DESTSGESEEEEEEEDEEESNPDDDLYSLTM) the composition is skewed to acidic residues. The segment at 281–294 (EESNPDDDLYSLTM) is binding to the N-RNA complex.

It belongs to the pneumoviridae phosphoprotein P family. In terms of assembly, homotetramer. Interacts with protein M2-1; the interaction between the two tetramers is required for the anti-termination and elongation transcriptional activities of protein M2-1. Interacts with host phosphatase PP1; this interaction recruits PP1 to the inclusion bodies. Formation of a complex PP1/M2-1/P allows P to target host PP1 phosphatase to the M2-1 substrate. Interacts with the nucleoprotein N; the phosphorylated phosphoprotein P binds to N-RNA complex. Interacts with the monomeric RNA-free nucleoprotein N. Interacts with RNA-directed RNA polymerase L (via N-terminus); the association of P and L forms the polymerase complex. Constitutively phosphorylated by host.

The protein resides in the virion. It localises to the host cytoplasm. In terms of biological role, plays critical roles in regulating RNA replication and transcription through its interactions with multiple proteins. Tethers the RNA-directed RNA polymerase L to the nucleoprotein-RNA complex. Recruits the M2-1 protein, a processivity factor that is required for efficient transcription of viral RNA. Acts as a chaperone for neo-synthesized nucleoprotein by forming an N-P complex that preserves N in a monomeric and RNA-free state and prevents the association of nascent N with host cell RNAs. Recruits the host phosphatase PP1 to inclusion bodies to regulate viral transcription. The protein is Phosphoprotein of Avian metapneumovirus (isolate Canada goose/Minnesota/15a/2001) (AMPV).